Here is a 100-residue protein sequence, read N- to C-terminus: Tetrahydromethanopterin S-methyltransferase subunit B (100 aa).

A helical membrane pass occupies residues 80–100; it reads KLTNIVYGFILGLIILFALLL.

This sequence belongs to the MtrB family. In terms of assembly, the complex is composed of 8 subunits; MtrA, MtrB, MtrC, MtrD, MtrE, MtrF, MtrG and MtrH.

The protein resides in the cell membrane. The enzyme catalyses 5-methyl-5,6,7,8-tetrahydromethanopterin + coenzyme M + 2 Na(+)(in) = 5,6,7,8-tetrahydromethanopterin + methyl-coenzyme M + 2 Na(+)(out). The protein operates within one-carbon metabolism; methanogenesis from CO(2); methyl-coenzyme M from 5,10-methylene-5,6,7,8-tetrahydromethanopterin: step 2/2. In terms of biological role, part of a complex that catalyzes the formation of methyl-coenzyme M and tetrahydromethanopterin from coenzyme M and methyl-tetrahydromethanopterin. This is an energy-conserving, sodium-ion translocating step. This chain is Tetrahydromethanopterin S-methyltransferase subunit B, found in Methanothermobacter marburgensis (strain ATCC BAA-927 / DSM 2133 / JCM 14651 / NBRC 100331 / OCM 82 / Marburg) (Methanobacterium thermoautotrophicum).